The primary structure comprises 637 residues: Neuroendocrine convertase 2 (637 aa).

The signal sequence occupies residues 1–24 (MEGGCGSQWKAAGLLFCVMVFASA). The propeptide occupies 25 to 108 (ERPVFTNHFL…QQEGFDRKKR (84 aa)). The region spanning 128–452 (QWYLFNTGQA…YGVLDAGAMV (325 aa)) is the Peptidase S8 domain. Active-site charge relay system residues include Asp-166 and His-207. Cystine bridges form between Cys-224–Cys-375 and Cys-316–Cys-346. Asn-374 carries an N-linked (GlcNAc...) asparagine glycan. Ser-383 functions as the Charge relay system in the catalytic mechanism. Positions 460 to 596 (TVPERFHCVG…TLMLHGTQSA (137 aa)) constitute a P/Homo B domain. The cysteines at positions 467 and 493 are disulfide-linked. N-linked (GlcNAc...) asparagine glycosylation is found at Asn-513 and Asn-523.

The protein belongs to the peptidase S8 family. Furin subfamily.

Its subcellular location is the cytoplasmic vesicle. It localises to the secretory vesicle. The protein localises to the secreted. The enzyme catalyses Release of protein hormones and neuropeptides from their precursors, generally by hydrolysis of -Lys-Arg-|- bonds.. Functionally, serine endopeptidase which is involved in the processing of hormone and other protein precursors at sites comprised of pairs of basic amino acid residues. Responsible for the release of glucagon from proglucagon in pancreatic A cells. The chain is Neuroendocrine convertase 2 (Pcsk2) from Rattus norvegicus (Rat).